Here is a 427-residue protein sequence, read N- to C-terminus: 3-phosphoshikimate 1-carboxyvinyltransferase (427 aa).

3 residues coordinate 3-phosphoshikimate: lysine 22, serine 23, and arginine 27. Lysine 22 contributes to the phosphoenolpyruvate binding site. Residues glycine 96 and arginine 124 each contribute to the phosphoenolpyruvate site. 7 residues coordinate 3-phosphoshikimate: serine 169, serine 170, glutamine 171, serine 197, aspartate 313, asparagine 336, and lysine 340. Glutamine 171 is a binding site for phosphoenolpyruvate. Aspartate 313 functions as the Proton acceptor in the catalytic mechanism. Arginine 344, arginine 386, and lysine 411 together coordinate phosphoenolpyruvate.

The protein belongs to the EPSP synthase family. As to quaternary structure, monomer.

Its subcellular location is the cytoplasm. It carries out the reaction 3-phosphoshikimate + phosphoenolpyruvate = 5-O-(1-carboxyvinyl)-3-phosphoshikimate + phosphate. Its pathway is metabolic intermediate biosynthesis; chorismate biosynthesis; chorismate from D-erythrose 4-phosphate and phosphoenolpyruvate: step 6/7. Its function is as follows. Catalyzes the transfer of the enolpyruvyl moiety of phosphoenolpyruvate (PEP) to the 5-hydroxyl of shikimate-3-phosphate (S3P) to produce enolpyruvyl shikimate-3-phosphate and inorganic phosphate. The protein is 3-phosphoshikimate 1-carboxyvinyltransferase of Salmonella paratyphi A (strain ATCC 9150 / SARB42).